The sequence spans 248 residues: Triosephosphate isomerase (248 aa).

2 residues coordinate substrate: Asn-10 and Lys-12. His-95 serves as the catalytic Electrophile. Residue Glu-165 is the Proton acceptor of the active site.

It belongs to the triosephosphate isomerase family. In terms of assembly, homodimer.

The catalysed reaction is D-glyceraldehyde 3-phosphate = dihydroxyacetone phosphate. Its pathway is carbohydrate biosynthesis; gluconeogenesis. It participates in carbohydrate degradation; glycolysis; D-glyceraldehyde 3-phosphate from glycerone phosphate: step 1/1. The protein is Triosephosphate isomerase (tpi-1) of Neurospora crassa (strain ATCC 24698 / 74-OR23-1A / CBS 708.71 / DSM 1257 / FGSC 987).